Reading from the N-terminus, the 251-residue chain is Imidazole glycerol phosphate synthase subunit HisF (251 aa).

Residues D11 and D130 contribute to the active site.

It belongs to the HisA/HisF family. Heterodimer of HisH and HisF.

Its subcellular location is the cytoplasm. It catalyses the reaction 5-[(5-phospho-1-deoxy-D-ribulos-1-ylimino)methylamino]-1-(5-phospho-beta-D-ribosyl)imidazole-4-carboxamide + L-glutamine = D-erythro-1-(imidazol-4-yl)glycerol 3-phosphate + 5-amino-1-(5-phospho-beta-D-ribosyl)imidazole-4-carboxamide + L-glutamate + H(+). The protein operates within amino-acid biosynthesis; L-histidine biosynthesis; L-histidine from 5-phospho-alpha-D-ribose 1-diphosphate: step 5/9. In terms of biological role, IGPS catalyzes the conversion of PRFAR and glutamine to IGP, AICAR and glutamate. The HisF subunit catalyzes the cyclization activity that produces IGP and AICAR from PRFAR using the ammonia provided by the HisH subunit. The polypeptide is Imidazole glycerol phosphate synthase subunit HisF (Flavobacterium johnsoniae (strain ATCC 17061 / DSM 2064 / JCM 8514 / BCRC 14874 / CCUG 350202 / NBRC 14942 / NCIMB 11054 / UW101) (Cytophaga johnsonae)).